A 204-amino-acid polypeptide reads, in one-letter code: Large ribosomal subunit protein eL15y (204 aa).

A disordered region spans residues 162–204 (RGLTSEGKKNRGLRGKGHNNHKNRPSRRATWKKNNSISLRRYR). Over residues 171 to 192 (NRGLRGKGHNNHKNRPSRRATW) the composition is skewed to basic residues. A compositionally biased stretch (polar residues) spans 193–204 (KKNNSISLRRYR).

It belongs to the eukaryotic ribosomal protein eL15 family.

In Arabidopsis thaliana (Mouse-ear cress), this protein is Large ribosomal subunit protein eL15y (RPL15B).